Reading from the N-terminus, the 149-residue chain is Chromophore lyase CpcS/CpeS homolog (149 aa).

This sequence belongs to the CpcS/CpeS biliprotein lyase family.

The protein resides in the plastid. The protein localises to the chloroplast. Functionally, might function to covalently attach a chromophore to Cys residue(s) of phycobiliproteins. The sequence is that of Chromophore lyase CpcS/CpeS homolog from Porphyra purpurea (Red seaweed).